Here is a 460-residue protein sequence, read N- to C-terminus: Argininosuccinate lyase (460 aa).

Belongs to the lyase 1 family. Argininosuccinate lyase subfamily.

Its subcellular location is the cytoplasm. The enzyme catalyses 2-(N(omega)-L-arginino)succinate = fumarate + L-arginine. It functions in the pathway amino-acid biosynthesis; L-arginine biosynthesis; L-arginine from L-ornithine and carbamoyl phosphate: step 3/3. This is Argininosuccinate lyase from Leuconostoc mesenteroides subsp. mesenteroides (strain ATCC 8293 / DSM 20343 / BCRC 11652 / CCM 1803 / JCM 6124 / NCDO 523 / NBRC 100496 / NCIMB 8023 / NCTC 12954 / NRRL B-1118 / 37Y).